Consider the following 329-residue polypeptide: Anthranilate phosphoribosyltransferase (329 aa).

5-phospho-alpha-D-ribose 1-diphosphate-binding positions include Gly78, 81-82, 88-91, 106-114, and Ser118; these read GD, NLST, and KHGNRAASS. Gly78 is an anthranilate binding site. Ser90 contacts Mg(2+). Position 109 (Asn109) interacts with anthranilate. Arg164 serves as a coordination point for anthranilate. Mg(2+) is bound by residues Asp221 and Glu222.

It belongs to the anthranilate phosphoribosyltransferase family. In terms of assembly, homodimer. It depends on Mg(2+) as a cofactor.

The enzyme catalyses N-(5-phospho-beta-D-ribosyl)anthranilate + diphosphate = 5-phospho-alpha-D-ribose 1-diphosphate + anthranilate. It functions in the pathway amino-acid biosynthesis; L-tryptophan biosynthesis; L-tryptophan from chorismate: step 2/5. In terms of biological role, catalyzes the transfer of the phosphoribosyl group of 5-phosphorylribose-1-pyrophosphate (PRPP) to anthranilate to yield N-(5'-phosphoribosyl)-anthranilate (PRA). The sequence is that of Anthranilate phosphoribosyltransferase from Thermus thermophilus (strain ATCC BAA-163 / DSM 7039 / HB27).